A 209-amino-acid chain; its full sequence is Ribonuclease HII (209 aa).

The 204-residue stretch at 6–209 (SLEAGIDEAG…IKRMTNSRLF (204 aa)) folds into the RNase H type-2 domain. Positions 12, 13, and 108 each coordinate a divalent metal cation.

Belongs to the RNase HII family. Mn(2+) is required as a cofactor. Mg(2+) serves as cofactor.

The protein resides in the cytoplasm. The catalysed reaction is Endonucleolytic cleavage to 5'-phosphomonoester.. Functionally, endonuclease that specifically degrades the RNA of RNA-DNA hybrids. The polypeptide is Ribonuclease HII (Caldivirga maquilingensis (strain ATCC 700844 / DSM 13496 / JCM 10307 / IC-167)).